The chain runs to 272 residues: Shikimate dehydrogenase (NADP(+)) (272 aa).

Residues 14–16 (SKS) and threonine 61 contribute to the shikimate site. The active-site Proton acceptor is lysine 65. Residue glutamate 77 participates in NADP(+) binding. Asparagine 86 and aspartate 102 together coordinate shikimate. NADP(+) contacts are provided by residues 126–130 (GAGGA), 149–154 (NRTVSR), and methionine 213. Tyrosine 215 contacts shikimate. Glycine 237 contributes to the NADP(+) binding site.

Belongs to the shikimate dehydrogenase family. As to quaternary structure, homodimer.

The catalysed reaction is shikimate + NADP(+) = 3-dehydroshikimate + NADPH + H(+). It participates in metabolic intermediate biosynthesis; chorismate biosynthesis; chorismate from D-erythrose 4-phosphate and phosphoenolpyruvate: step 4/7. Functionally, involved in the biosynthesis of the chorismate, which leads to the biosynthesis of aromatic amino acids. Catalyzes the reversible NADPH linked reduction of 3-dehydroshikimate (DHSA) to yield shikimate (SA). The polypeptide is Shikimate dehydrogenase (NADP(+)) (Escherichia coli O6:H1 (strain CFT073 / ATCC 700928 / UPEC)).